A 351-amino-acid chain; its full sequence is Dihydroorotate dehydrogenase (quinone) (351 aa).

Residues 67 to 71 (AGFDK) and threonine 91 each bind FMN. Lysine 71 provides a ligand contact to substrate. 116–120 (NAMGF) is a substrate binding site. Residues asparagine 145 and asparagine 178 each coordinate FMN. Asparagine 178 lines the substrate pocket. Serine 181 serves as the catalytic Nucleophile. Asparagine 183 is a binding site for substrate. Lysine 214 and threonine 242 together coordinate FMN. Position 243–244 (243–244 (NT)) interacts with substrate. FMN is bound by residues glycine 262, glycine 291, and 312-313 (YS).

Belongs to the dihydroorotate dehydrogenase family. Type 2 subfamily. In terms of assembly, monomer. It depends on FMN as a cofactor.

Its subcellular location is the cell membrane. It catalyses the reaction (S)-dihydroorotate + a quinone = orotate + a quinol. The protein operates within pyrimidine metabolism; UMP biosynthesis via de novo pathway; orotate from (S)-dihydroorotate (quinone route): step 1/1. Catalyzes the conversion of dihydroorotate to orotate with quinone as electron acceptor. The sequence is that of Dihydroorotate dehydrogenase (quinone) from Helicobacter pylori (strain P12).